The chain runs to 167 residues: Transcription factor E (167 aa).

Residues 5-87 enclose the HTH TFE/IIEalpha-type domain; sequence ENPIHRAYLL…LWKICPESLD (83 aa).

The protein belongs to the TFE family. As to quaternary structure, monomer. Interaction with RNA polymerase subunits RpoF and RpoE is necessary for Tfe stimulatory transcription activity. Able to interact with Tbp and RNA polymerase in the absence of DNA promoter. Interacts both with the preinitiation and elongation complexes.

Transcription factor that plays a role in the activation of archaeal genes transcribed by RNA polymerase. Facilitates transcription initiation by enhancing TATA-box recognition by TATA-box-binding protein (Tbp), and transcription factor B (Tfb) and RNA polymerase recruitment. Not absolutely required for transcription in vitro, but particularly important in cases where Tbp or Tfb function is not optimal. It dynamically alters the nucleic acid-binding properties of RNA polymerases by stabilizing the initiation complex and destabilizing elongation complexes. Seems to translocate with the RNA polymerase following initiation and acts by binding to the non template strand of the transcription bubble in elongation complexes. The chain is Transcription factor E from Methanothrix thermoacetophila (strain DSM 6194 / JCM 14653 / NBRC 101360 / PT) (Methanosaeta thermophila).